The sequence spans 665 residues: Macrolide export ATP-binding/permease protein MacB (665 aa).

The 239-residue stretch at M17–K255 folds into the ABC transporter domain. Residue G53 to S60 participates in ATP binding. Helical transmembrane passes span L287–G307, I544–V564, F588–F608, and S630–A650.

Belongs to the ABC transporter superfamily. Macrolide exporter (TC 3.A.1.122) family. Homodimer. Part of the tripartite efflux system MacAB-TolC, which is composed of an inner membrane transporter, MacB, a periplasmic membrane fusion protein, MacA, and an outer membrane component, TolC. The complex forms a large protein conduit and can translocate molecules across both the inner and outer membranes. Interacts with MacA.

Its subcellular location is the cell inner membrane. Its function is as follows. Part of the tripartite efflux system MacAB-TolC. MacB is a non-canonical ABC transporter that contains transmembrane domains (TMD), which form a pore in the inner membrane, and an ATP-binding domain (NBD), which is responsible for energy generation. Confers resistance against macrolides. This Psychrobacter arcticus (strain DSM 17307 / VKM B-2377 / 273-4) protein is Macrolide export ATP-binding/permease protein MacB.